We begin with the raw amino-acid sequence, 894 residues long: Alpha-actinin-2 (894 aa).

Positions 1 to 254 (MNQIEPGVQY…IMTYVSCFYH (254 aa)) are actin-binding. 2 consecutive Calponin-homology (CH) domains span residues 38 to 142 (KQQR…LRFA) and 151 to 257 (TSAK…HAFA). T237 bears the Phosphothreonine mark. Spectrin repeat units follow at residues 281–391 (RLME…WLLN), 401–506 (HLAE…ALER), 516–627 (QLHL…SLQE), and 637–740 (RLRR…EVET). 2 consecutive EF-hand domains span residues 753–788 (EQMNEFRASFNHFDRRKNGLMDHEDFRACLISMGYD) and 789–824 (LGEAEFARIMTLVDPNGQGTVTFQSFIDFMTRETAD). Ca(2+)-binding residues include D766, N770, D777, D802, N804, and T808.

Belongs to the alpha-actinin family. As to quaternary structure, homodimer; antiparallel. Also forms heterodimers with ACTN3. Interacts with ADAM12, MYOZ1, MYOZ2 and MYOZ3. Interacts via its C-terminal region with the LDB3 PDZ domain. Interacts with XIRP2. Interacts with DST (via N-terminus). Interacts with PARVB. Interacts with SYNPO2. In terms of processing, ubiquitinated by FBXL22, leading to proteasomal degradation.

It is found in the cytoplasm. It localises to the myofibril. The protein localises to the sarcomere. The protein resides in the z line. In terms of biological role, F-actin cross-linking protein which is thought to anchor actin to a variety of intracellular structures. This is a bundling protein. This is Alpha-actinin-2 (ACTN2) from Bos taurus (Bovine).